An 874-amino-acid chain; its full sequence is MSIQSILRKETLKKKDKNIDLQENNINDLVVSASRVIAPLWPISTFAAHHPWMGLEKQSFERVANWLKEARNVDIYPSASMIHSAKAKGEIEESFLQMALSRWLDSQSFHIPRKKVEQFCQAALKLEELPSSLLSSPQLNKLAEEMSYINTESMKDSFLQPVSSFIENQKGENLSDILNYHIIKWCKLYLDDSGSSWTMPNREQGLYRAWHHLIKFDPALSKTERKVLKDWPEDALIALTKALSELGISESNMQAYLEGHLLSLPGWAGMVRWRSQQSIEEQELLIEYLAVRLSMELAVVKPYLPLKNQKVEKKVSIVPLIASWIYWGDISTREWLQMSATEQSELLAFAYRFDENIRKKLWLEAWEQTHAEQLKKKISSKQRATNDKKRVVAQLAFCIDVRSEPFRRHLEKLGPFETFGIAGFFGLPIATTELGSNDSHPSLPVILKPKHQIKELTDENECKSYEQRKMVGSSVRYTFKTMKQNVLTSMLLPEVSGPLLGLQMVTRSFVPRRVGGFIRNLRKNMLQKPDTTFSLNHVHDTNCEIPIGFTKEEKVNYVRQALKMVGLTEGFAPLVVMCGHSSQSTNNPYAAALECGACGGAAGGFNARVFATLCNLPEVREALSAEGIKIPDDTIFAAAEHKTTVDELEWIYVPELSETAQEAFDCIEAIMPNVSQHANRERLMQLPNFKTKIKNPSKEAHRFAEDWSEIRPEWGLARNASFIIGQRELTQDCDLEGRAFLHNYDWKQDERGDILANIIAGPGTVAQWINLQYYASTVAPHYYGSGNKTTQTVTAGLGVMQGNASDLLPGLPWQSVMQSDRETYHSPLRLLIVIQAPTKYIEHLLNNDFTFREKVQNGWVRLASVDPEGRWKNW.

4 residues coordinate Zn(2+): Cys398, Asp400, His580, and Cys595.

The protein belongs to the inorganic carbon transporter (TC 9.A.2) DabA family. In terms of assembly, forms a complex with DabB. Requires Zn(2+) as cofactor.

It is found in the cell membrane. Its function is as follows. Part of an energy-coupled inorganic carbon pump. In Bacillus cereus (strain 03BB102), this protein is Probable inorganic carbon transporter subunit DabA.